The chain runs to 286 residues: 33 kDa chaperonin (286 aa).

Intrachain disulfides connect Cys225–Cys227 and Cys258–Cys261.

This sequence belongs to the HSP33 family. Under oxidizing conditions two disulfide bonds are formed involving the reactive cysteines. Under reducing conditions zinc is bound to the reactive cysteines and the protein is inactive.

The protein localises to the cytoplasm. In terms of biological role, redox regulated molecular chaperone. Protects both thermally unfolding and oxidatively damaged proteins from irreversible aggregation. Plays an important role in the bacterial defense system toward oxidative stress. This chain is 33 kDa chaperonin, found in Shewanella baltica (strain OS223).